We begin with the raw amino-acid sequence, 178 residues long: ATP-dependent protease subunit HslV (178 aa).

The active site involves T7. Na(+) contacts are provided by G162, C165, and T168.

The protein belongs to the peptidase T1B family. HslV subfamily. As to quaternary structure, a double ring-shaped homohexamer of HslV is capped on each side by a ring-shaped HslU homohexamer. The assembly of the HslU/HslV complex is dependent on binding of ATP.

It is found in the cytoplasm. It catalyses the reaction ATP-dependent cleavage of peptide bonds with broad specificity.. With respect to regulation, allosterically activated by HslU binding. Functionally, protease subunit of a proteasome-like degradation complex believed to be a general protein degrading machinery. The sequence is that of ATP-dependent protease subunit HslV from Cupriavidus necator (strain ATCC 17699 / DSM 428 / KCTC 22496 / NCIMB 10442 / H16 / Stanier 337) (Ralstonia eutropha).